The chain runs to 550 residues: Dihydroxy-acid dehydratase (550 aa).

Residue aspartate 78 coordinates Mg(2+). Cysteine 119 is a binding site for [2Fe-2S] cluster. Residues aspartate 120 and lysine 121 each contribute to the Mg(2+) site. An N6-carboxylysine modification is found at lysine 121. Position 191 (cysteine 191) interacts with [2Fe-2S] cluster. Residue glutamate 440 coordinates Mg(2+). Serine 466 functions as the Proton acceptor in the catalytic mechanism.

The protein belongs to the IlvD/Edd family. In terms of assembly, homodimer. Requires [2Fe-2S] cluster as cofactor. The cofactor is Mg(2+).

The catalysed reaction is (2R)-2,3-dihydroxy-3-methylbutanoate = 3-methyl-2-oxobutanoate + H2O. It carries out the reaction (2R,3R)-2,3-dihydroxy-3-methylpentanoate = (S)-3-methyl-2-oxopentanoate + H2O. It participates in amino-acid biosynthesis; L-isoleucine biosynthesis; L-isoleucine from 2-oxobutanoate: step 3/4. The protein operates within amino-acid biosynthesis; L-valine biosynthesis; L-valine from pyruvate: step 3/4. Functions in the biosynthesis of branched-chain amino acids. Catalyzes the dehydration of (2R,3R)-2,3-dihydroxy-3-methylpentanoate (2,3-dihydroxy-3-methylvalerate) into 2-oxo-3-methylpentanoate (2-oxo-3-methylvalerate) and of (2R)-2,3-dihydroxy-3-methylbutanoate (2,3-dihydroxyisovalerate) into 2-oxo-3-methylbutanoate (2-oxoisovalerate), the penultimate precursor to L-isoleucine and L-valine, respectively. This is Dihydroxy-acid dehydratase from Methanococcus maripaludis (strain DSM 14266 / JCM 13030 / NBRC 101832 / S2 / LL).